A 322-amino-acid chain; its full sequence is MFLCVRILKRKYHELSSFQKLLIFTITIFLLWVLGVVDKFRETSFGDFSWPLETRNLQLRSKFTKYPQCKFSGNGQKIIIIIIKSSAKNGPMRESVRKTWGVFRMIDGVEVMPIFIVGRVENMEIMRRIDVESEKYKDILAISDIDSYRNNTLKLFGAIDYAANPNQCSSPDFTFLVDDDYLVHIPNLVKFAKTKQKEELVYEGFVFDTSPFRLKIHKHSISLNEYPFSRYPPYVSAGAVFLTSETIARFRNSIRKLKMFPFDDVFTGILAKTVNVAATHNENFIFWCRRVSQKEWDDGVIAVHGYARKDLEYEYSQLNGFE.

Residues 1 to 16 are Cytoplasmic-facing; it reads MFLCVRILKRKYHELS. A helical; Signal-anchor for type II membrane protein transmembrane segment spans residues 17–37; it reads SFQKLLIFTITIFLLWVLGVV. The Lumenal portion of the chain corresponds to 38 to 322; the sequence is DKFRETSFGD…YEYSQLNGFE (285 aa). A glycan (N-linked (GlcNAc...) asparagine) is linked at N150.

Belongs to the glycosyltransferase 31 family. Expressed in the gut.

It is found in the golgi apparatus membrane. Its pathway is protein modification; protein glycosylation. Functionally, transfers N-acetylgalactosamine onto mannose groups of carbohydrate substrates. Required for susceptibility to pore-forming crystal toxins in conjunction with bre-1, bre-2, bre-3, and bre-4. Involved in resistance to the nematotoxic C.cinerea galectin Cgl2. This is Beta-1,3-galactosyltransferase bre-5 from Caenorhabditis elegans.